A 157-amino-acid polypeptide reads, in one-letter code: 2-C-methyl-D-erythritol 2,4-cyclodiphosphate synthase (157 aa).

Residues D8 and H10 each coordinate a divalent metal cation. Residues 8 to 10 (DVH) and 34 to 35 (HS) contribute to the 4-CDP-2-C-methyl-D-erythritol 2-phosphate site. H42 lines the a divalent metal cation pocket. Residues 56 to 58 (DIG), 61 to 65 (FPDTD), 100 to 106 (AQAPKMA), 132 to 135 (TTTE), F139, and R142 contribute to the 4-CDP-2-C-methyl-D-erythritol 2-phosphate site.

The protein belongs to the IspF family. In terms of assembly, homotrimer. A divalent metal cation is required as a cofactor.

It carries out the reaction 4-CDP-2-C-methyl-D-erythritol 2-phosphate = 2-C-methyl-D-erythritol 2,4-cyclic diphosphate + CMP. Its pathway is isoprenoid biosynthesis; isopentenyl diphosphate biosynthesis via DXP pathway; isopentenyl diphosphate from 1-deoxy-D-xylulose 5-phosphate: step 4/6. Involved in the biosynthesis of isopentenyl diphosphate (IPP) and dimethylallyl diphosphate (DMAPP), two major building blocks of isoprenoid compounds. Catalyzes the conversion of 4-diphosphocytidyl-2-C-methyl-D-erythritol 2-phosphate (CDP-ME2P) to 2-C-methyl-D-erythritol 2,4-cyclodiphosphate (ME-CPP) with a corresponding release of cytidine 5-monophosphate (CMP). This Pseudomonas savastanoi pv. phaseolicola (strain 1448A / Race 6) (Pseudomonas syringae pv. phaseolicola (strain 1448A / Race 6)) protein is 2-C-methyl-D-erythritol 2,4-cyclodiphosphate synthase.